The primary structure comprises 102 residues: Small ribosomal subunit protein uS10 (102 aa).

This sequence belongs to the universal ribosomal protein uS10 family. As to quaternary structure, part of the 30S ribosomal subunit.

Its function is as follows. Involved in the binding of tRNA to the ribosomes. The sequence is that of Small ribosomal subunit protein uS10 from Methanococcus maripaludis (strain C5 / ATCC BAA-1333).